The chain runs to 317 residues: Melanocyte-stimulating hormone receptor (317 aa).

The Extracellular portion of the chain corresponds to Met1 to Glu37. An N-linked (GlcNAc...) asparagine glycan is attached at Asn29. Residues Val38–Ile63 traverse the membrane as a helical segment. The Cytoplasmic segment spans residues Ala64 to Pro72. A helical transmembrane segment spans residues Met73–Leu93. Residues Glu94–Asn118 are Extracellular-facing. A helical transmembrane segment spans residues Thr119 to Val140. Topologically, residues Asp141 to Arg163 are cytoplasmic. The chain crosses the membrane as a helical span at residues Ala164–Cys183. At Asp184 to Cys191 the chain is on the extracellular side. Residues Leu192 to Leu211 traverse the membrane as a helical segment. The Cytoplasmic portion of the chain corresponds to Ala212–Ala240. The chain crosses the membrane as a helical span at residues Ala241–Leu266. Over Cys267–Asn279 the chain is Extracellular. The chain crosses the membrane as a helical span at residues Phe280–Phe300. Topologically, residues Arg301–Trp317 are cytoplasmic. Cys315 carries the S-palmitoyl cysteine lipid modification.

This sequence belongs to the G-protein coupled receptor 1 family. Interacts with MGRN1, but does not undergo MGRN1-mediated ubiquitination; this interaction competes with GNAS-binding and thus inhibits agonist-induced cAMP production. Interacts with OPN3; the interaction results in a decrease in MC1R-mediated cAMP signaling and ultimately a decrease in melanin production in melanocytes.

It localises to the cell membrane. In terms of biological role, receptor for MSH (alpha, beta and gamma) and ACTH. The activity of this receptor is mediated by G proteins which activate adenylate cyclase. Mediates melanogenesis, the production of eumelanin (black/brown) and phaeomelanin (red/yellow), via regulation of cAMP signaling in melanocytes. The protein is Melanocyte-stimulating hormone receptor (MC1R) of Alouatta caraya (Black howler monkey).